The sequence spans 439 residues: Proline--tRNA ligase (439 aa).

Belongs to the class-II aminoacyl-tRNA synthetase family. ProS type 2 subfamily. Homodimer.

The protein resides in the cytoplasm. The enzyme catalyses tRNA(Pro) + L-proline + ATP = L-prolyl-tRNA(Pro) + AMP + diphosphate. Its function is as follows. Catalyzes the attachment of proline to tRNA(Pro) in a two-step reaction: proline is first activated by ATP to form Pro-AMP and then transferred to the acceptor end of tRNA(Pro). The protein is Proline--tRNA ligase of Rhodopseudomonas palustris (strain BisB5).